Consider the following 101-residue polypeptide: Large ribosomal subunit protein uL23 (101 aa).

Belongs to the universal ribosomal protein uL23 family. Part of the 50S ribosomal subunit. Contacts protein L29, and trigger factor when it is bound to the ribosome.

One of the early assembly proteins it binds 23S rRNA. One of the proteins that surrounds the polypeptide exit tunnel on the outside of the ribosome. Forms the main docking site for trigger factor binding to the ribosome. This Haemophilus ducreyi (strain 35000HP / ATCC 700724) protein is Large ribosomal subunit protein uL23.